Here is a 344-residue protein sequence, read N- to C-terminus: Heat-inducible transcription repressor HrcA (344 aa).

This sequence belongs to the HrcA family.

Its function is as follows. Negative regulator of class I heat shock genes (grpE-dnaK-dnaJ and groELS operons). Prevents heat-shock induction of these operons. The chain is Heat-inducible transcription repressor HrcA from Streptococcus pyogenes serotype M1.